Reading from the N-terminus, the 856-residue chain is Translation initiation factor IF-2 (856 aa).

2 disordered regions span residues 1–248 and 254–273; these read MSDN…ARAR and KRAR…QQKQ. The segment covering 22–38 has biased composition (polar residues); it reads ETGQVKQSFSHGRSNTV. A compositionally biased stretch (pro residues) spans 83-93; sequence APRPAPAPIPT. A compositionally biased stretch (basic and acidic residues) spans 100–150; the sequence is LERREQQERLLREAEEARMAALEETRRREERAKAEATEEERRRAEENRRAE. The segment covering 156-196 has biased composition (low complexity); that stretch reads AAAAAAAAATAEAETAAAAPREEAPAAAGTAEEAPRTSSST. Positions 197–209 are enriched in pro residues; that stretch reads MPPPRRFTPVPSP. Positions 210–229 are enriched in basic and acidic residues; sequence KRPEPPRPQQRDRKGDDRRQ. The 171-residue stretch at 356–526 folds into the tr-type G domain; the sequence is PRPPVVTIMG…ELQAELLELK (171 aa). The G1 stretch occupies residues 365–372; that stretch reads GHVDHGKT. 365–372 provides a ligand contact to GTP; sequence GHVDHGKT. The G2 stretch occupies residues 390–394; that stretch reads GITQH. The interval 412 to 415 is G3; the sequence is DTPG. GTP is bound by residues 412–416 and 466–469; these read DTPGH and NKMD. A G4 region spans residues 466 to 469; the sequence is NKMD. Residues 502–504 form a G5 region; that stretch reads SAL.

The protein belongs to the TRAFAC class translation factor GTPase superfamily. Classic translation factor GTPase family. IF-2 subfamily.

The protein localises to the cytoplasm. Its function is as follows. One of the essential components for the initiation of protein synthesis. Protects formylmethionyl-tRNA from spontaneous hydrolysis and promotes its binding to the 30S ribosomal subunits. Also involved in the hydrolysis of GTP during the formation of the 70S ribosomal complex. This Rhizorhabdus wittichii (strain DSM 6014 / CCUG 31198 / JCM 15750 / NBRC 105917 / EY 4224 / RW1) (Sphingomonas wittichii) protein is Translation initiation factor IF-2.